We begin with the raw amino-acid sequence, 147 residues long: Angiogenin (147 aa).

The first 24 residues, 1–24 (MVMGLGVLLLVFVLGLGLTPPTLA), serve as a signal peptide directing secretion. Glutamine 25 carries the pyrrolidone carboxylic acid modification. The Proton acceptor role is filled by histidine 37. TRNA contacts are provided by arginine 45 and aspartate 46. Cystine bridges form between cysteine 50–cysteine 105, cysteine 63–cysteine 116, and cysteine 81–cysteine 131. The Nucleolar localization signal signature appears at 55-59 (RRRGL). TRNA is bound by residues cysteine 105 and valine 127. The active-site Proton donor is histidine 138.

It belongs to the pancreatic ribonuclease family. In terms of assembly, homodimer. Interacts with RNH1; inhibiting ANG ribonuclease activity. Interacts with PCNA.

The protein resides in the secreted. Its subcellular location is the nucleus. The protein localises to the nucleolus. It localises to the cytoplasm. It is found in the stress granule. Has weak tRNA ribonuclease activity by itself due to partial autoinhibition by its C-terminus, which folds into a short alpha-helix that partially occludes the substrate-binding site. In absence of stress, the ribonuclease activity is inhibited by RNH1 in the cytoplasm. In response to stress, dissociates from RNH1 in the cytoplasm and associates with cytoplasmic ribosomes with vacant A-sites: ribosomes directly activate the tRNA ribonuclease activity of ANG by refolding the C-terminal alpha-helix. In response to stress, the angiogenic activity of ANG is inhibited by RNH1 in the nucleus. In terms of biological role, secreted ribonuclease that can either promote or restrict cell proliferation of target cells, depending on the context. Endocytosed in target cells via its receptor PLXNB2 and translocates to the cytoplasm or nucleus. Under stress conditions, localizes to the cytoplasm and promotes the assembly of stress granules (SGs): specifically cleaves a subset of tRNAs within anticodon loops to produce tRNA-derived stress-induced fragments (tiRNAs), resulting in translation repression and inhibition of cell proliferation. tiRNas also prevent formation of apoptosome, thereby promoting cell survival. Preferentially cleaves RNAs between a pyrimidine and an adenosine residue, suggesting that it cleaves the anticodon loop of tRNA(Ala) (32-UUAGCAU-38) after positions 33 and 36. Cleaves a subset of tRNAs, including tRNA(Ala), tRNA(Glu), tRNA(Gly), tRNA(Lys), tRNA(Val), tRNA(His), tRNA(Asp) and tRNA(Sec). Under growth conditions and in differentiated cells, translocates to the nucleus and stimulates ribosomal RNA (rRNA) transcription, including that containing the initiation site sequences of 45S rRNA, thereby promoting cell growth and proliferation. Angiogenin induces vascularization of normal and malignant tissues via its ability to promote rRNA transcription. Involved in hematopoietic stem and progenitor cell (HSPC) growth and survival by promoting rRNA transcription in growth conditions and inhibiting translation in response to stress, respectively. Mediates the crosstalk between myeloid and intestinal epithelial cells to protect the intestinal epithelial barrier integrity: secreted by myeloid cells and promotes intestinal epithelial cells proliferation and survival. Also mediates osteoclast-endothelial cell crosstalk in growing bone: produced by osteoclasts and protects the neighboring vascular cells against senescence by promoting rRNA transcription. The sequence is that of Angiogenin (ANG) from Gorilla gorilla gorilla (Western lowland gorilla).